The chain runs to 416 residues: MKVIVLGAGIVGVTSAYQLAKAGHDVTVVDRQPGPALETSFANAGEVSFGYCSPWAAPGIPMKAMKWLFMKHAPLILRPKLDMAMLSWMARMLSNCTSERYAINKSRMLRLADYSRIALADLRAETGIAYDERMQGTLQLFRTQQQLEASAKDVKALAADGIPYEVLDRDGCIRFEPALKHVRDKIVGGLLTPKDETGDCFKFTNALAAKAEALGVRFAYGTTIKALDVEAGRVRGVITDRERMSAEAVVVALGSYSPLLLKPLGIRLPVYPVKGYSLTIPIADASRAPESTVMDETYKIAITRLGDRIRVGGMAEISGYTNDLGLARRSTLEYSVTDLFPGGDISKASFWSGLRPMTPDGTPVIGPTKVAGLFLNTGHGTLGWTMSTGSARLIGDLVGGGQPEIDARDLAITRYG.

Residue 3–17 coordinates FAD; that stretch reads VIVLGAGIVGVTSAY.

Belongs to the DadA oxidoreductase family. FAD is required as a cofactor.

The enzyme catalyses a D-alpha-amino acid + A + H2O = a 2-oxocarboxylate + AH2 + NH4(+). The protein operates within amino-acid degradation; D-alanine degradation; NH(3) and pyruvate from D-alanine: step 1/1. Oxidative deamination of D-amino acids. The polypeptide is D-amino acid dehydrogenase (Rhizobium johnstonii (strain DSM 114642 / LMG 32736 / 3841) (Rhizobium leguminosarum bv. viciae)).